The primary structure comprises 93 residues: uncharacterized protein (93 aa).

The first 22 residues, Met1–Thr22, serve as a signal peptide directing secretion. N-linked (GlcNAc...) asparagine; by host glycosylation is present at Asn5.

This is an uncharacterized protein from Invertebrate iridescent virus 6 (IIV-6).